Reading from the N-terminus, the 480-residue chain is F-box/LRR-repeat protein 14 (480 aa).

The F-box domain occupies 11-58 (DRQMDELPDHLVWDILSKLHTTDDRNSLSLSCKRFFSLDNEQRYSLRI). 15 LRR repeats span residues 61-86 (GLVPASDALLSLCRRFPNLSKVEIIY), 94-119 (GKQVDDQGLLVLTTNCHSLTDLTLSF), 120-144 (CTFITDVGIGHLSSCPELSSLKLNF), 145-170 (APRITGCGVLSLAVGCKKLRRLHLIR), 171-196 (CLNVASVEWLEYFGKLETLEELCIKN), 197-222 (CRAIGEGDLIKLRNSWRKLTSLQFEV), 229-257 (MKVYDQLDVERWPKQLVPCDSLVELSLGN), 258-283 (CIIAPGRGLACVLRNCKNLEKLHLDM), 284-309 (CTGVSDSDIIALVQKASHLRSISLRV), 322-347 (TLRLTDESLSAIAQHCSKLESFKISF), 355-379 (LFSFTLQGIITLIQKCPVRELSLDH), 380-404 (VCVFNDMGMEALCSAQKLEILELVH), 405-429 (CQEVSDEGLILVSQFPSLNVLKLSK), 430-454 (CLGVTDDGMRPLVGSHKLELLVVED), and 455-480 (CPQVSRRGVHGAATSVSFKQDLSWMY).

In Arabidopsis thaliana (Mouse-ear cress), this protein is F-box/LRR-repeat protein 14 (FBL14).